The following is a 595-amino-acid chain: NADH-quinone oxidoreductase subunit C/D (595 aa).

Residues 1–185 are NADH dehydrogenase I subunit C; the sequence is MTDLTAQAAC…DPFELTKAKQ (185 aa). Positions 209-595 are NADH dehydrogenase I subunit D; that stretch reads DFMFLNLGPN…IDFVMSDVDR (387 aa).

The protein in the N-terminal section; belongs to the complex I 30 kDa subunit family. It in the C-terminal section; belongs to the complex I 49 kDa subunit family. NDH-1 is composed of 13 different subunits. Subunits NuoB, CD, E, F, and G constitute the peripheral sector of the complex.

It is found in the cell inner membrane. The enzyme catalyses a quinone + NADH + 5 H(+)(in) = a quinol + NAD(+) + 4 H(+)(out). NDH-1 shuttles electrons from NADH, via FMN and iron-sulfur (Fe-S) centers, to quinones in the respiratory chain. The immediate electron acceptor for the enzyme in this species is believed to be ubiquinone. Couples the redox reaction to proton translocation (for every two electrons transferred, four hydrogen ions are translocated across the cytoplasmic membrane), and thus conserves the redox energy in a proton gradient. This Enterobacter sp. (strain 638) protein is NADH-quinone oxidoreductase subunit C/D.